We begin with the raw amino-acid sequence, 285 residues long: 2-dehydro-3-deoxyphosphooctonate aldolase (285 aa).

Belongs to the KdsA family.

The protein resides in the cytoplasm. The enzyme catalyses D-arabinose 5-phosphate + phosphoenolpyruvate + H2O = 3-deoxy-alpha-D-manno-2-octulosonate-8-phosphate + phosphate. Its pathway is carbohydrate biosynthesis; 3-deoxy-D-manno-octulosonate biosynthesis; 3-deoxy-D-manno-octulosonate from D-ribulose 5-phosphate: step 2/3. It participates in bacterial outer membrane biogenesis; lipopolysaccharide biosynthesis. This chain is 2-dehydro-3-deoxyphosphooctonate aldolase, found in Polaromonas naphthalenivorans (strain CJ2).